Consider the following 256-residue polypeptide: Probable succinate transporter subunit YjjP (256 aa).

Over 1–113 the chain is Cytoplasmic; it reads MQTEQQRAVT…KRFSQIQPLR (113 aa). A helical transmembrane segment spans residues 114-135; the sequence is YPRWLVALMVGLSCACFCKLNN. The Periplasmic segment spans residues 136-140; the sequence is GGWDG. The chain crosses the membrane as a helical span at residues 141–158; the sequence is AVITFFASTTAMYIRQLL. Residues 159–168 lie on the Cytoplasmic side of the membrane; it reads AQRHLHPQIN. The chain crosses the membrane as a helical span at residues 169–189; it reads FCLTAFAATTISGLLLQLPTF. The Periplasmic segment spans residues 190–194; that stretch reads SNTPT. Residues 195 to 215 traverse the membrane as a helical segment; that stretch reads IAMAASVLLLVPGFPLINAVA. The Cytoplasmic segment spans residues 216–228; that stretch reads DMFKGHINTGLAR. Residues 229–249 traverse the membrane as a helical segment; it reads WAIASLLTLATCVGVVMALTI. The Periplasmic portion of the chain corresponds to 250–256; that stretch reads WGLRGWV.

This sequence belongs to the ThrE exporter (TC 2.A.79) family. In terms of assembly, the transporter is composed of YjjB and YjjP.

It is found in the cell inner membrane. Involved in succinate export with YjjB. Both proteins are required for export. Contributes to succinate production under both aerobic and anaerobic conditions. The chain is Probable succinate transporter subunit YjjP (yjjP) from Escherichia coli (strain K12).